The primary structure comprises 427 residues: L-threonine dehydratase biosynthetic IlvA (427 aa).

Lysine 63 bears the N6-(pyridoxal phosphate)lysine mark. Pyridoxal 5'-phosphate is bound by residues asparagine 90, 193–197 (GGGGC), and serine 319. The 75-residue stretch at 343 to 417 (HYFLVDFPQK…TEMHVETLQP (75 aa)) folds into the ACT-like domain.

Belongs to the serine/threonine dehydratase family. In terms of assembly, homotetramer. It depends on pyridoxal 5'-phosphate as a cofactor.

The enzyme catalyses L-threonine = 2-oxobutanoate + NH4(+). The protein operates within amino-acid biosynthesis; L-isoleucine biosynthesis; 2-oxobutanoate from L-threonine: step 1/1. Catalyzes the anaerobic formation of alpha-ketobutyrate and ammonia from threonine in a two-step reaction. The first step involved a dehydration of threonine and a production of enamine intermediates (aminocrotonate), which tautomerizes to its imine form (iminobutyrate). Both intermediates are unstable and short-lived. The second step is the nonenzymatic hydrolysis of the enamine/imine intermediates to form 2-ketobutyrate and free ammonia. In the low water environment of the cell, the second step is accelerated by RidA. This Mycobacterium leprae (strain TN) protein is L-threonine dehydratase biosynthetic IlvA (ilvA).